A 544-amino-acid chain; its full sequence is MFS-type transporter prx5 (544 aa).

Positions 1–28 (MAVDTEKDSVQAGSPMETPGSPVDETTE) are disordered. 13 helical membrane passes run 36–56 (WIVSMILSCGYGLSFWPIPVV), 90–110 (LDHLCFLDLVCFIGHIVVASA), 116–136 (VIAGLVVSGFGGANCQMAAFA), 148–168 (IGVVIADLTVYIAVIIAPVTA), 178–198 (AWNFWGVAIFQGLSFFGLLFL), 221–241 (GAFLFIGGAVPFLMGIVWAGV), 249–269 (VVAPLVVGAAVLVCFALWESF), 290–310 (FTAPVIALGVVNMFYYSSSIL), 330–350 (VILSLPQGFAIFFGAMLLTCF), 361–381 (LTGSVFVMVVFGSLLGIVTPT), 387–407 (IAFIFLSQAGFGWALYLSIAI), 418–438 (GVSGGISGCIRFAAGAVATSI), and 505–525 (AIFVVAMVSMAFGILGLAACL).

This sequence belongs to the major facilitator superfamily.

It localises to the cell membrane. In terms of biological role, MFS-type transporter; part of the gene cluster that mediates the biosynthesis of PR-toxin, a bicyclic sesquiterpene belonging to the eremophilane class and acting as a mycotoxin. The polypeptide is MFS-type transporter prx5 (Penicillium rubens (strain ATCC 28089 / DSM 1075 / NRRL 1951 / Wisconsin 54-1255) (Penicillium chrysogenum)).